An 851-amino-acid chain; its full sequence is MNNTDKLDSHTPMMQQYLRLKAQHPEILLFYRMGDFYELFYSDAKRASQLLDISLTKRGASAGEPIPMAGVPYHSIENYLAKLVQLGESAAICEQIGDPATSKGPVERKVVRIVTPGTVSDEALLQERQDNLLAAIWQDARGFGYATLDISSGRFRVAEPADLETMAAELQRTNPAELLYPENFEQMSLIEHRHGLRRRPLWEFELETAKQQLNLQFGTRDLIGFGVEQAHQALRAAGCLLQYVKDTQRTSLPHIRGLTMERQQDGIVMDAATRRNLELTQNLSGGTENTLAAILDCTVTAMGSRMLKRWLHMPIRDTKVLTDRQQAIGGLQDITAELQTPLRQVGDLERILARLALRTARPRDLARMRHAFQQLPEIHRLLQPVNVPHIQNLLSQVGQFDELQDLLERAIVETPPVLVRDGGVIASGYNAELDEWRALADGATDYLDRLEIREREKLGLDTLKVGFNGVHGYYIQVSRGQSHLVPIHYVRRQTLKNAERYIIPELKEYEDKVLTSKGKALAIEKGLYEEIFDLLLPHLPELQTSANALAELDVLANLAERAETLNYNCPVLSDKPGIKITGGRHPVVEQVLSEPFISNPLTLSPQRRMLIITGPNMGGKSTYMRQTALIVLLAHMGSYVPADQATIGPVDRIFTRVGAADDLASGRSTFMVEMTETANILHNATEQSLVLMDEIGRGTSTYDGLSLAWACAENLASRIKAMTLFATHYFELTTLPEKMEGVVNVHLDALEHGETIAFMHSVQDGAASKSYGLAVAALAGVPRDVIKRARQKLKELESLSNNAAASKIDGSQLTLLNEEVSPAVEALEALDPDSLSPRQALEWIYRLKNMV.

Position 614–621 (614–621 (GPNMGGKS)) interacts with ATP.

It belongs to the DNA mismatch repair MutS family.

Functionally, this protein is involved in the repair of mismatches in DNA. It is possible that it carries out the mismatch recognition step. This protein has a weak ATPase activity. The protein is DNA mismatch repair protein MutS of Yersinia enterocolitica serotype O:8 / biotype 1B (strain NCTC 13174 / 8081).